Reading from the N-terminus, the 239-residue chain is Carboxy-S-adenosyl-L-methionine synthase (239 aa).

Residues Y35, 64–66, 114–115, N129, and R196 each bind S-adenosyl-L-methionine; these read GSS and DL.

The protein belongs to the class I-like SAM-binding methyltransferase superfamily. Cx-SAM synthase family. Homodimer.

The enzyme catalyses prephenate + S-adenosyl-L-methionine = carboxy-S-adenosyl-L-methionine + 3-phenylpyruvate + H2O. In terms of biological role, catalyzes the conversion of S-adenosyl-L-methionine (SAM) to carboxy-S-adenosyl-L-methionine (Cx-SAM). The protein is Carboxy-S-adenosyl-L-methionine synthase of Helicobacter hepaticus (strain ATCC 51449 / 3B1).